The following is a 326-amino-acid chain: Phenylalanine--tRNA ligase alpha subunit (326 aa).

E251 serves as a coordination point for Mg(2+).

This sequence belongs to the class-II aminoacyl-tRNA synthetase family. Phe-tRNA synthetase alpha subunit type 1 subfamily. In terms of assembly, tetramer of two alpha and two beta subunits. It depends on Mg(2+) as a cofactor.

It is found in the cytoplasm. The catalysed reaction is tRNA(Phe) + L-phenylalanine + ATP = L-phenylalanyl-tRNA(Phe) + AMP + diphosphate + H(+). This Alteromonas mediterranea (strain DSM 17117 / CIP 110805 / LMG 28347 / Deep ecotype) protein is Phenylalanine--tRNA ligase alpha subunit.